The primary structure comprises 533 residues: CTP synthase (533 aa).

The interval 1-265 is amidoligase domain; the sequence is MTKFIFVTGG…ARYLVRRLGL (265 aa). Position 13 (Ser-13) interacts with CTP. Residue Ser-13 participates in UTP binding. Residue 14 to 19 participates in ATP binding; sequence GLGKGI. An L-glutamine-binding site is contributed by Tyr-54. Residue Asp-71 participates in ATP binding. Mg(2+)-binding residues include Asp-71 and Glu-139. CTP is bound by residues 146–148, 186–191, and Lys-222; these read DIE and KTKPTQ. UTP-binding positions include 186-191 and Lys-222; that span reads KTKPTQ. A Glutamine amidotransferase type-1 domain is found at 290–532; it reads EIAIVGKYVK…VRAARERKYG (243 aa). Gly-351 provides a ligand contact to L-glutamine. Cys-378 functions as the Nucleophile; for glutamine hydrolysis in the catalytic mechanism. L-glutamine-binding positions include 379-382, Glu-402, and Arg-459; that span reads FGFQ. Catalysis depends on residues His-505 and Glu-507.

The protein belongs to the CTP synthase family. In terms of assembly, homotetramer.

The catalysed reaction is UTP + L-glutamine + ATP + H2O = CTP + L-glutamate + ADP + phosphate + 2 H(+). The enzyme catalyses L-glutamine + H2O = L-glutamate + NH4(+). It catalyses the reaction UTP + NH4(+) + ATP = CTP + ADP + phosphate + 2 H(+). It functions in the pathway pyrimidine metabolism; CTP biosynthesis via de novo pathway; CTP from UDP: step 2/2. Its activity is regulated as follows. Allosterically activated by GTP, when glutamine is the substrate; GTP has no effect on the reaction when ammonia is the substrate. The allosteric effector GTP functions by stabilizing the protein conformation that binds the tetrahedral intermediate(s) formed during glutamine hydrolysis. Inhibited by the product CTP, via allosteric rather than competitive inhibition. In terms of biological role, catalyzes the ATP-dependent amination of UTP to CTP with either L-glutamine or ammonia as the source of nitrogen. Regulates intracellular CTP levels through interactions with the four ribonucleotide triphosphates. In Thermococcus gammatolerans (strain DSM 15229 / JCM 11827 / EJ3), this protein is CTP synthase.